Here is a 1159-residue protein sequence, read N- to C-terminus: DNA-directed RNA polymerase subunit beta' (1159 aa).

3 residues coordinate Mg(2+): Asp-398, Asp-400, and Asp-402. Zn(2+)-binding residues include Cys-741, Cys-815, Cys-822, and Cys-825.

This sequence belongs to the RNA polymerase beta' chain family. As to quaternary structure, the RNAP catalytic core consists of 2 alpha, 1 beta, 1 beta' and 1 omega subunit. When a sigma factor is associated with the core the holoenzyme is formed, which can initiate transcription. It depends on Mg(2+) as a cofactor. The cofactor is Zn(2+).

The catalysed reaction is RNA(n) + a ribonucleoside 5'-triphosphate = RNA(n+1) + diphosphate. DNA-dependent RNA polymerase catalyzes the transcription of DNA into RNA using the four ribonucleoside triphosphates as substrates. The protein is DNA-directed RNA polymerase subunit beta' of Porphyromonas cangingivalis.